The chain runs to 402 residues: Enoyl-[acyl-carrier-protein] reductase [NADH] (402 aa).

Residues 48-53, 74-75, 111-112, and 140-141 contribute to the NAD(+) site; these read GASSGY, FE, DA, and LA. A substrate-binding site is contributed by Tyr226. Catalysis depends on Tyr236, which acts as the Proton donor. Residues Lys245 and 274–276 contribute to the NAD(+) site; that span reads VVT.

Belongs to the TER reductase family. Monomer.

It catalyses the reaction a 2,3-saturated acyl-[ACP] + NAD(+) = a (2E)-enoyl-[ACP] + NADH + H(+). Its pathway is lipid metabolism; fatty acid biosynthesis. Involved in the final reduction of the elongation cycle of fatty acid synthesis (FAS II). Catalyzes the reduction of a carbon-carbon double bond in an enoyl moiety that is covalently linked to an acyl carrier protein (ACP). This is Enoyl-[acyl-carrier-protein] reductase [NADH] from Xanthomonas campestris pv. campestris (strain 8004).